The sequence spans 431 residues: Beta-1,4-glucuronyltransferase 1 (431 aa).

Residues 1–11 (MHFSKKCSVFK) lie on the Cytoplasmic side of the membrane. Residues 12–32 (VVLSALLIVALLQLLYLSFLS) traverse the membrane as a helical segment. The Lumenal portion of the chain corresponds to 33–431 (KLHGKQQRYK…AKYPTSPRRC (399 aa)). N-linked (GlcNAc...) asparagine glycosylation occurs at Asn216. Residues Asp241 and Asp243 each coordinate Mn(2+). Residue Asn314 is glycosylated (N-linked (GlcNAc...) asparagine).

Belongs to the glycosyltransferase 49 family. It depends on Mn(2+) as a cofactor.

It localises to the golgi apparatus membrane. It catalyses the reaction 3-O-[beta-D-Xyl-(1-&gt;4)-Rib-ol-P-Rib-ol-P-3-beta-D-GalNAc-(1-&gt;3)-beta-D-GlcNAc-(1-&gt;4)-(O-6-P-alpha-D-Man)]-Thr-[protein] + UDP-alpha-D-glucuronate = 3-O-[beta-D-GlcA-(1-&gt;3)-beta-D-Xyl-(1-&gt;4)-Rib-ol-P-Rib-ol-P-3-beta-D-GalNAc-(1-&gt;3)-beta-D-GlcNAc-(1-&gt;4)-(O-6-P-alpha-D-Man)]-Thr-[protein] + UDP + H(+). Its pathway is protein modification; protein glycosylation. Functionally, beta-1,4-glucuronyltransferase involved in O-mannosylation of alpha-dystroglycan (DAG1). Transfers a glucuronic acid (GlcA) residue onto a xylose (Xyl) acceptor to produce the glucuronyl-beta-1,4-xylose-beta disaccharide primer, which is further elongated by LARGE, during synthesis of phosphorylated O-mannosyl glycan. Phosphorylated O-mannosyl glycan is a carbohydrate structure present in alpha-dystroglycan (DAG1), which is required for binding laminin G-like domain-containing extracellular proteins with high affinity. Required for axon guidance; via its function in O-mannosylation of alpha-dystroglycan (DAG1). The polypeptide is Beta-1,4-glucuronyltransferase 1 (Danio rerio (Zebrafish)).